The following is a 166-amino-acid chain: Protein SprT (166 aa).

The region spanning 20–164 (EHLANANRKL…CVRCGDLLVA (145 aa)) is the SprT-like domain. Position 78 (H78) interacts with Zn(2+). E79 is an active-site residue. H82 provides a ligand contact to Zn(2+).

This sequence belongs to the SprT family. Requires Zn(2+) as cofactor.

It localises to the cytoplasm. The protein is Protein SprT of Klebsiella pneumoniae subsp. pneumoniae (strain ATCC 700721 / MGH 78578).